The chain runs to 564 residues: Quinone-dependent D-lactate dehydrogenase (564 aa).

The FAD-binding PCMH-type domain maps to 36 to 207; the sequence is GTGNALAVVR…TNLQEKRYQV (172 aa). FAD-binding positions include 70–74, 78–79, G137, S144, G154, and V256; these read AANTG and GS.

This sequence belongs to the quinone-dependent D-lactate dehydrogenase family. It depends on FAD as a cofactor.

The protein localises to the cell inner membrane. It catalyses the reaction (R)-lactate + a quinone = a quinol + pyruvate. Catalyzes the oxidation of D-lactate to pyruvate. This Haemophilus influenzae (strain ATCC 51907 / DSM 11121 / KW20 / Rd) protein is Quinone-dependent D-lactate dehydrogenase.